A 150-amino-acid chain; its full sequence is Ribonuclease K6 (150 aa).

The first 23 residues, 1 to 23 (MVLCFPLLLLLLVLWGPVCLLHA), serve as a signal peptide directing secretion. His-38 serves as the catalytic Proton acceptor. Intrachain disulfides connect Cys-46–Cys-104, Cys-60–Cys-114, Cys-78–Cys-129, and Cys-85–Cys-92. Asn-55 carries an N-linked (GlcNAc...) asparagine glycan. Substrate is bound by residues 61–65 (KHQNT) and Lys-86. N-linked (GlcNAc...) asparagine glycosylation is present at Asn-100. Substrate is bound at residue Arg-105. His-145 (proton donor) is an active-site residue.

It belongs to the pancreatic ribonuclease family. In terms of assembly, interacts (via N-terminus) with bacterial lipopolysaccharide (LPS).

Its subcellular location is the secreted. The protein resides in the lysosome. It is found in the cytoplasmic granule. Ribonuclease which shows a preference for the pyrimidines uridine and cytosine. Has potent antibacterial activity against a range of Gram-positive and Gram-negative bacteria, including P.aeruginosa, A.baumanii, M.luteus, S.aureus, E.faecalis, E.faecium, S.saprophyticus and E.coli. Causes loss of bacterial membrane integrity, and also promotes agglutination of Gram-negative bacteria. Probably contributes to urinary tract sterility. Bactericidal activity is independent of RNase activity. The polypeptide is Ribonuclease K6 (RNASE6) (Chlorocebus aethiops (Green monkey)).